Consider the following 106-residue polypeptide: UPF0060 membrane protein Bphy_5052 (106 aa).

A run of 4 helical transmembrane segments spans residues 4 to 24 (LLLY…PWRW), 30 to 50 (SVWL…LLTF), 58 to 78 (VYAA…WCVD), and 82 to 102 (PSAW…IIAF).

The protein belongs to the UPF0060 family.

It is found in the cell inner membrane. The protein is UPF0060 membrane protein Bphy_5052 of Paraburkholderia phymatum (strain DSM 17167 / CIP 108236 / LMG 21445 / STM815) (Burkholderia phymatum).